We begin with the raw amino-acid sequence, 456 residues long: Bifunctional protein GlmU (456 aa).

Residues 1–230 are pyrophosphorylase; it reads MDKRFAVVLA…FQETLGVNDR (230 aa). UDP-N-acetyl-alpha-D-glucosamine is bound by residues 9 to 12, lysine 23, glutamine 73, and 78 to 79; these read LAAG and GT. Residue aspartate 103 coordinates Mg(2+). Residues glycine 140, glutamate 155, asparagine 170, and asparagine 228 each coordinate UDP-N-acetyl-alpha-D-glucosamine. A Mg(2+)-binding site is contributed by asparagine 228. Positions 231–251 are linker; it reads VALSQAEIYMKQRINKRHMQN. Positions 252 to 456 are N-acetyltransferase; that stretch reads GVSLIDPDNT…EDYAENIHKK (205 aa). Residues arginine 333 and lysine 351 each contribute to the UDP-N-acetyl-alpha-D-glucosamine site. Histidine 363 functions as the Proton acceptor in the catalytic mechanism. 2 residues coordinate UDP-N-acetyl-alpha-D-glucosamine: tyrosine 366 and asparagine 377. Acetyl-CoA is bound by residues 386–387, alanine 423, and arginine 440; that span reads NY.

This sequence in the N-terminal section; belongs to the N-acetylglucosamine-1-phosphate uridyltransferase family. It in the C-terminal section; belongs to the transferase hexapeptide repeat family. In terms of assembly, homotrimer. Mg(2+) is required as a cofactor.

The protein resides in the cytoplasm. It carries out the reaction alpha-D-glucosamine 1-phosphate + acetyl-CoA = N-acetyl-alpha-D-glucosamine 1-phosphate + CoA + H(+). The enzyme catalyses N-acetyl-alpha-D-glucosamine 1-phosphate + UTP + H(+) = UDP-N-acetyl-alpha-D-glucosamine + diphosphate. It participates in nucleotide-sugar biosynthesis; UDP-N-acetyl-alpha-D-glucosamine biosynthesis; N-acetyl-alpha-D-glucosamine 1-phosphate from alpha-D-glucosamine 6-phosphate (route II): step 2/2. It functions in the pathway nucleotide-sugar biosynthesis; UDP-N-acetyl-alpha-D-glucosamine biosynthesis; UDP-N-acetyl-alpha-D-glucosamine from N-acetyl-alpha-D-glucosamine 1-phosphate: step 1/1. The protein operates within bacterial outer membrane biogenesis; LPS lipid A biosynthesis. Catalyzes the last two sequential reactions in the de novo biosynthetic pathway for UDP-N-acetylglucosamine (UDP-GlcNAc). The C-terminal domain catalyzes the transfer of acetyl group from acetyl coenzyme A to glucosamine-1-phosphate (GlcN-1-P) to produce N-acetylglucosamine-1-phosphate (GlcNAc-1-P), which is converted into UDP-GlcNAc by the transfer of uridine 5-monophosphate (from uridine 5-triphosphate), a reaction catalyzed by the N-terminal domain. The chain is Bifunctional protein GlmU from Bacillus licheniformis (strain ATCC 14580 / DSM 13 / JCM 2505 / CCUG 7422 / NBRC 12200 / NCIMB 9375 / NCTC 10341 / NRRL NRS-1264 / Gibson 46).